The following is a 255-amino-acid chain: Ciliogenesis and planar polarity effector 2 (255 aa).

The segment at 52 to 255 is small GTPase-like; it reads PADIASYKLF…VIAGLVGGAD (204 aa). GTP contacts are provided by residues 64–71 and 177–180; these read GRSGAGKT and TKLD.

Belongs to the small GTPase superfamily. Rab family.

The protein localises to the cytoplasm. The protein resides in the cytoskeleton. It localises to the cilium basal body. In terms of biological role, potential effector of the planar cell polarity signaling pathway. Plays a role in targeted membrane trafficking most probably at the level of vesicle fusion with membranes. Involved in cilium biogenesis by regulating the transport of cargo proteins to the basal body and to the apical tips of cilia. More generally involved in exocytosis in secretory cells. The sequence is that of Ciliogenesis and planar polarity effector 2 (cplane2) from Xenopus tropicalis (Western clawed frog).